Here is a 127-residue protein sequence, read N- to C-terminus: MFRTMMNGKIHRATVTEANLNYVGSITIDSAILEAVDMLPNEKVQIVNNNNGARIETYIIPGEPGSGVICLNGAAARHVQVGDVVIIMSYGMFTTEEANKHEPKIVVLDEKNHIEMILPEEKTHTTL.

Residue Ser-25 is the Schiff-base intermediate with substrate; via pyruvic acid of the active site. Residue Ser-25 is modified to Pyruvic acid (Ser). Thr-57 is a binding site for substrate. The active-site Proton donor is Tyr-58. 73–75 contacts substrate; it reads GAA.

The protein belongs to the PanD family. Heterooctamer of four alpha and four beta subunits. The cofactor is pyruvate. Is synthesized initially as an inactive proenzyme, which is activated by self-cleavage at a specific serine bond to produce a beta-subunit with a hydroxyl group at its C-terminus and an alpha-subunit with a pyruvoyl group at its N-terminus.

It is found in the cytoplasm. It carries out the reaction L-aspartate + H(+) = beta-alanine + CO2. It functions in the pathway cofactor biosynthesis; (R)-pantothenate biosynthesis; beta-alanine from L-aspartate: step 1/1. In terms of biological role, catalyzes the pyruvoyl-dependent decarboxylation of aspartate to produce beta-alanine. This is Aspartate 1-decarboxylase from Listeria welshimeri serovar 6b (strain ATCC 35897 / DSM 20650 / CCUG 15529 / CIP 8149 / NCTC 11857 / SLCC 5334 / V8).